A 165-amino-acid chain; its full sequence is Putative BTB/POZ domain-containing protein At2g40440 (165 aa).

A BTB domain is found at 24 to 98 (VDVRLKAGDS…IYSDGSMLSA (75 aa)).

Its pathway is protein modification; protein ubiquitination. Functionally, may act as a substrate-specific adapter of an E3 ubiquitin-protein ligase complex (CUL3-RBX1-BTB) which mediates the ubiquitination and subsequent proteasomal degradation of target proteins. The sequence is that of Putative BTB/POZ domain-containing protein At2g40440 from Arabidopsis thaliana (Mouse-ear cress).